The primary structure comprises 167 residues: Large ribosomal subunit protein uL10 (167 aa).

It belongs to the universal ribosomal protein uL10 family. As to quaternary structure, part of the ribosomal stalk of the 50S ribosomal subunit. The N-terminus interacts with L11 and the large rRNA to form the base of the stalk. The C-terminus forms an elongated spine to which L12 dimers bind in a sequential fashion forming a multimeric L10(L12)X complex.

In terms of biological role, forms part of the ribosomal stalk, playing a central role in the interaction of the ribosome with GTP-bound translation factors. In Psychromonas ingrahamii (strain DSM 17664 / CCUG 51855 / 37), this protein is Large ribosomal subunit protein uL10.